A 938-amino-acid polypeptide reads, in one-letter code: Microperfuranone synthase (938 aa).

The segment at 44–445 (TSTRISYAEL…AGRTKDTIIV (402 aa)) is adenylation (A) domain. A Carrier domain is found at 579–655 (SDSERAVQKA…AIARSIDSSR (77 aa)). The interval 581–652 (SERAVQKALV…TPGAIARSID (72 aa)) is thiolation and peptide carrier (T) domain. O-(pantetheine 4'-phosphoryl)serine is present on serine 613. The thioesterase (TE) domain stretch occupies residues 676–923 (PLFCIHPGSG…AKMLNREHIA (248 aa)). Residue serine 746 is part of the active site.

Belongs to the ATP-dependent AMP-binding enzyme family.

Its pathway is secondary metabolite biosynthesis. Its function is as follows. Microperfuranone synthase is the only protein required for the biosynthesis of the secondary metabolite microperfuranone from phenylpyruvic acid (PPA). Several steps for the microperfuranione biosynthesis have been proposed. These steps include the activation of PPA, by the micA adenylation (A) domain to AMP-phenylpyruvic acid followed by loading of the PPA unit to the thiolation and peptide carrier (T) domain and eventually transferring to the thioesterase (TE) domain. After loading another PPA unit onto the T domain, aldol condensation establishes the carbon-carbon bond between the alpha- and beta-carbon of the two PPA units. Sulfur-assisted furan ring formation, TE domain mediated hydrolysis, decarboxylation, and keto-enol tautomerization would generate microperfuranone attached to the T domain. Finally, microperfuranone is released by the TE domain. The polypeptide is Microperfuranone synthase (Emericella nidulans (strain FGSC A4 / ATCC 38163 / CBS 112.46 / NRRL 194 / M139) (Aspergillus nidulans)).